We begin with the raw amino-acid sequence, 250 residues long: Leucyl/phenylalanyl-tRNA--protein transferase (250 aa).

The protein belongs to the L/F-transferase family.

The protein localises to the cytoplasm. It catalyses the reaction N-terminal L-lysyl-[protein] + L-leucyl-tRNA(Leu) = N-terminal L-leucyl-L-lysyl-[protein] + tRNA(Leu) + H(+). It carries out the reaction N-terminal L-arginyl-[protein] + L-leucyl-tRNA(Leu) = N-terminal L-leucyl-L-arginyl-[protein] + tRNA(Leu) + H(+). The catalysed reaction is L-phenylalanyl-tRNA(Phe) + an N-terminal L-alpha-aminoacyl-[protein] = an N-terminal L-phenylalanyl-L-alpha-aminoacyl-[protein] + tRNA(Phe). Functionally, functions in the N-end rule pathway of protein degradation where it conjugates Leu, Phe and, less efficiently, Met from aminoacyl-tRNAs to the N-termini of proteins containing an N-terminal arginine or lysine. This Cupriavidus necator (strain ATCC 17699 / DSM 428 / KCTC 22496 / NCIMB 10442 / H16 / Stanier 337) (Ralstonia eutropha) protein is Leucyl/phenylalanyl-tRNA--protein transferase.